Here is a 250-residue protein sequence, read N- to C-terminus: Aquaporin SIP2-1 (250 aa).

The next 2 membrane-spanning stretches (helical) occupy residues Pro14–Val34 and Val55–Ala75. An NPA 1 motif is present at residues Asn78–Leu80. Helical transmembrane passes span Leu95 to Val115, Ser132 to Val152, Phe178 to Tyr200, and Leu211 to Leu231. An NPA 2 motif is present at residues Asn191–Ala193.

Belongs to the MIP/aquaporin (TC 1.A.8) family. SIP (TC 1.A.8.10) subfamily. Expressed in leaves and anthers, and at lower levels in roots.

The protein resides in the membrane. Its function is as follows. Aquaporins facilitate the transport of water and small neutral solutes across cell membranes. The sequence is that of Aquaporin SIP2-1 (SIP2-1) from Oryza sativa subsp. japonica (Rice).